Consider the following 136-residue polypeptide: Large ribosomal subunit protein uL16 (136 aa).

Belongs to the universal ribosomal protein uL16 family. In terms of assembly, part of the 50S ribosomal subunit.

Its function is as follows. Binds 23S rRNA and is also seen to make contacts with the A and possibly P site tRNAs. The protein is Large ribosomal subunit protein uL16 of Psychromonas ingrahamii (strain DSM 17664 / CCUG 51855 / 37).